The following is a 1269-amino-acid chain: Phospholipase D A (1269 aa).

A compositionally biased stretch (polar residues) spans 55 to 64 (YTSVGSAPTT). The tract at residues 55–121 (YTSVGSAPTT…NNNLQSPTQS (67 aa)) is disordered. Low complexity-rich tracts occupy residues 65–87 (NNNS…SGSS) and 95–114 (NSNK…NNNN). The stretch at 131 to 192 (SKALHDFEEK…ELKSLDELLH (62 aa)) forms a coiled coil. Residues 222-232 (NSVTNNTPSSA) are compositionally biased toward polar residues. Disordered stretches follow at residues 222 to 269 (NSVT…SSST) and 300 to 320 (NSYP…DPNL). Residues 233-269 (TPLTLSNNNNYTSSSLATSPTTNSSSSSSSSSSSSST) are compositionally biased toward low complexity. 2 PLD phosphodiesterase domains span residues 435 to 462 (IYWS…CFGR) and 704 to 731 (EQIY…NDRS). Residues His-440, Lys-442, Asp-447, His-709, Lys-711, and Asp-716 contribute to the active site. Residues 803–835 (NNNNNSNINNNINNNNNEINNNNNNNNNNNSNE) adopt a coiled-coil conformation. Low complexity-rich tracts occupy residues 810 to 850 (INNN…NSNS), 859 to 906 (NLPP…GTTN), and 934 to 943 (SSPQDSPQDS). 2 disordered regions span residues 810–966 (INNN…HQSP) and 983–1007 (SNEQ…TTTD). The segment covering 987 to 1003 (LPPPPSSTTPPPPPPPL) has biased composition (pro residues). Positions 1059 to 1096 (TTAQQQQQQQQQQQQQQQQQQQQQQQQQQQQQQQQQQQ) form a coiled coil. Residues 1116 to 1167 (IKKKRSSISPSTSSNKLLLSGNGSGDSIRVVTDSGSSPRGQPRSMSSLHDHA) form a disordered region. Residues 1122-1142 (SISPSTSSNKLLLSGNGSGDS) show a composition bias toward low complexity. The segment covering 1148 to 1162 (DSGSSPRGQPRSMSS) has biased composition (polar residues).

The protein belongs to the phospholipase D family.

It carries out the reaction a 1,2-diacyl-sn-glycero-3-phosphocholine + H2O = a 1,2-diacyl-sn-glycero-3-phosphate + choline + H(+). With respect to regulation, inhibited by butan-1-ol. Its function is as follows. Plays a role in cell growth. Hydrolyzes membrane phospholipids, such as PtdCho free headgroup and PtdOH (phosphatidic acid; signaling molecule on its own). Involved in the inhibition of actin-based motility and endocytosis. Its inhibition causes complete collapse of F-actin organization. In Dictyostelium discoideum (Social amoeba), this protein is Phospholipase D A (pldA).